The following is a 628-amino-acid chain: DEAD-box ATP-dependent RNA helicase 9 (628 aa).

The Q motif motif lies at 98–126; the sequence is LEVAKLGISPKIVSQLASRGITKLFPIQR. Residues 129–302 enclose the Helicase ATP-binding domain; the sequence is LEPAMQGKDM…QKYLKNPVTI (174 aa). Residue 142–149 coordinates ATP; that stretch reads AKTGTGKT. Residues 250–253 carry the DEAD box motif; sequence DEAD. The Helicase C-terminal domain occupies 331-478; that stretch reads VLGELIKEHA…KINVEGSDLM (148 aa). Disordered regions lie at residues 496-548 and 571-628; these read GSYG…SGFG and SGFG…FGSS. Over residues 500–509 the composition is skewed to low complexity; it reads RRGSFGSSSS. Residues 510-548 show a composition bias toward gly residues; it reads RGGGFGDSGFGRSGGGFGRSGGGGFGRSSGGGFGDSGFG.

It belongs to the DEAD box helicase family. DDX21/DDX50 subfamily.

It catalyses the reaction ATP + H2O = ADP + phosphate + H(+). This is DEAD-box ATP-dependent RNA helicase 9 from Oryza sativa subsp. japonica (Rice).